The primary structure comprises 747 residues: DNA ligase (747 aa).

NAD(+)-binding positions include 113 to 117 (DRAYD), 161 to 162 (SI), and Glu-190. Lys-192 serves as the catalytic N6-AMP-lysine intermediate. NAD(+)-binding residues include Arg-213, Glu-249, Lys-364, and Lys-388. Residues Cys-479, Cys-482, Cys-495, and Cys-501 each coordinate Zn(2+). The 88-residue stretch at 660 to 747 (TTNAPLSDLT…EHDDTLTWPP (88 aa)) folds into the BRCT domain.

This sequence belongs to the NAD-dependent DNA ligase family. LigA subfamily. The cofactor is Mg(2+). Mn(2+) is required as a cofactor.

The enzyme catalyses NAD(+) + (deoxyribonucleotide)n-3'-hydroxyl + 5'-phospho-(deoxyribonucleotide)m = (deoxyribonucleotide)n+m + AMP + beta-nicotinamide D-nucleotide.. Functionally, DNA ligase that catalyzes the formation of phosphodiester linkages between 5'-phosphoryl and 3'-hydroxyl groups in double-stranded DNA using NAD as a coenzyme and as the energy source for the reaction. It is essential for DNA replication and repair of damaged DNA. The chain is DNA ligase from Haloquadratum walsbyi (strain DSM 16790 / HBSQ001).